We begin with the raw amino-acid sequence, 720 residues long: NAD(+) hydrolase ApTIR (720 aa).

Positions 1–131 (MRYDAFISYS…AVPPALRGVF (131 aa)) constitute a TIR domain. NAD(+)-binding positions include 10–11 (SH) and Ala48. Glu84 is a catalytic residue. A helical membrane pass occupies residues 192-211 (GALAVVCALLLLVAGTAVAW). 2 disordered regions span residues 231-275 (ATAA…AVAE) and 292-359 (EGIA…EEAV). Basic and acidic residues-rich tracts occupy residues 256 to 268 (EQQR…EEAR) and 307 to 359 (AEAR…EEAV). A coiled-coil region spans residues 313–362 (RGVADAEKAKANRAAAEAERQRKIAADEQRKAHEAAAEAERQREEAVKQQ). 7 WD repeats span residues 420-459 (GHTA…APRR), 465-504 (SSTA…APRR), 510-549 (GHTD…APRR), 555-594 (DHTA…APRR), 600-639 (GHTA…APRR), 645-684 (GHTA…APRR), and 690-720 (GHTD…CCGM).

The protein localises to the cell membrane. It catalyses the reaction NAD(+) + H2O = ADP-D-ribose + nicotinamide + H(+). NAD(+) hydrolase (NADase) that catalyzes cleavage of NAD(+) into ADP-D-ribose (ADPR) and nicotinamide. This is NAD(+) hydrolase ApTIR from Actinoplanes sp. (strain ATCC 31044 / CBS 674.73 / SE50/110).